The sequence spans 202 residues: Peptidyl-tRNA hydrolase (202 aa).

Y16 lines the tRNA pocket. H21 serves as the catalytic Proton acceptor. Y68, N70, and N116 together coordinate tRNA.

Belongs to the PTH family. Monomer.

It localises to the cytoplasm. The catalysed reaction is an N-acyl-L-alpha-aminoacyl-tRNA + H2O = an N-acyl-L-amino acid + a tRNA + H(+). In terms of biological role, hydrolyzes ribosome-free peptidyl-tRNAs (with 1 or more amino acids incorporated), which drop off the ribosome during protein synthesis, or as a result of ribosome stalling. Functionally, catalyzes the release of premature peptidyl moieties from peptidyl-tRNA molecules trapped in stalled 50S ribosomal subunits, and thus maintains levels of free tRNAs and 50S ribosomes. In Treponema pallidum (strain Nichols), this protein is Peptidyl-tRNA hydrolase.